Consider the following 395-residue polypeptide: uncharacterized protein (395 aa).

The next 10 helical transmembrane spans lie at 19-39 (IGIA…IAII), 49-69 (VLLI…IYEL), 87-107 (LTWI…AVGG), 137-157 (LVII…PLGT), 172-192 (YINL…FYLI), 206-226 (TINI…SLIA), 252-272 (LIGG…MGMG), 279-299 (LFIM…KILA), 311-331 (GLVF…GSLI), and 359-379 (VLCT…GAVI).

It belongs to the chloride channel (TC 2.A.49) family.

It localises to the cell membrane. This is an uncharacterized protein from Methanocaldococcus jannaschii (strain ATCC 43067 / DSM 2661 / JAL-1 / JCM 10045 / NBRC 100440) (Methanococcus jannaschii).